Here is a 158-residue protein sequence, read N- to C-terminus: MITIDITVESARWNNEKMLYDITEKALKTTMNHLSLENVVSEISLLFTDDKHMAQINAQWRNKNKSTNVLSFPALPLKAGDPPGLMLGDIIIAQETVVLEAKKEGKSFQDHLTHMIVHGILHLLGYNHETNDEACQMEELEREILLKLSINDPYAELS.

Zn(2+) is bound by residues His-118, His-122, and His-128.

Belongs to the endoribonuclease YbeY family. Zn(2+) is required as a cofactor.

The protein localises to the cytoplasm. Its function is as follows. Single strand-specific metallo-endoribonuclease involved in late-stage 70S ribosome quality control and in maturation of the 3' terminus of the 16S rRNA. The chain is Endoribonuclease YbeY from Bartonella quintana (strain Toulouse) (Rochalimaea quintana).